The chain runs to 107 residues: MISGDTILFALMVVTGVNMIRYLTALRSLIYIMREAHPLLYQQVDGNGFFTTHGNVTKQVRLFHYIKSKEYHHHHDEIFTGKCERVRELFVLSTALLGVTLLAAFIL.

Helical transmembrane passes span 6-26 and 86-106; these read TILFALMVVTGVNMIRYLTAL and VRELFVLSTALLGVTLLAAFI.

Belongs to the universal stress protein B family.

Its subcellular location is the cell inner membrane. The protein is Universal stress protein B homolog of Vibrio parahaemolyticus serotype O3:K6 (strain RIMD 2210633).